The sequence spans 520 residues: UvrABC system protein C (520 aa).

In terms of domain architecture, GIY-YIG spans 11–89 (EEPGCYQFKD…IKKYQPKYNI (79 aa)). The UVR domain occupies 195-230 (QDLIYDLRKEMETFAAAEEYEKALVIRDRIAAIENL).

This sequence belongs to the UvrC family. As to quaternary structure, interacts with UvrB in an incision complex.

It localises to the cytoplasm. Functionally, the UvrABC repair system catalyzes the recognition and processing of DNA lesions. UvrC both incises the 5' and 3' sides of the lesion. The N-terminal half is responsible for the 3' incision and the C-terminal half is responsible for the 5' incision. This chain is UvrABC system protein C, found in Methanospirillum hungatei JF-1 (strain ATCC 27890 / DSM 864 / NBRC 100397 / JF-1).